The primary structure comprises 214 residues: ATP phosphoribosyltransferase (214 aa).

Belongs to the ATP phosphoribosyltransferase family. Short subfamily. Heteromultimer composed of HisG and HisZ subunits.

Its subcellular location is the cytoplasm. The enzyme catalyses 1-(5-phospho-beta-D-ribosyl)-ATP + diphosphate = 5-phospho-alpha-D-ribose 1-diphosphate + ATP. The protein operates within amino-acid biosynthesis; L-histidine biosynthesis; L-histidine from 5-phospho-alpha-D-ribose 1-diphosphate: step 1/9. Its function is as follows. Catalyzes the condensation of ATP and 5-phosphoribose 1-diphosphate to form N'-(5'-phosphoribosyl)-ATP (PR-ATP). Has a crucial role in the pathway because the rate of histidine biosynthesis seems to be controlled primarily by regulation of HisG enzymatic activity. This is ATP phosphoribosyltransferase from Halorhodospira halophila (strain DSM 244 / SL1) (Ectothiorhodospira halophila (strain DSM 244 / SL1)).